We begin with the raw amino-acid sequence, 180 residues long: ATP synthase subunit delta (180 aa).

It belongs to the ATPase delta chain family. As to quaternary structure, F-type ATPases have 2 components, F(1) - the catalytic core - and F(0) - the membrane proton channel. F(1) has five subunits: alpha(3), beta(3), gamma(1), delta(1), epsilon(1). CF(0) has four main subunits: a(1), b(1), b'(1) and c(10-14). The alpha and beta chains form an alternating ring which encloses part of the gamma chain. F(1) is attached to F(0) by a central stalk formed by the gamma and epsilon chains, while a peripheral stalk is formed by the delta, b and b' chains.

The protein resides in the cellular thylakoid membrane. Functionally, f(1)F(0) ATP synthase produces ATP from ADP in the presence of a proton or sodium gradient. F-type ATPases consist of two structural domains, F(1) containing the extramembraneous catalytic core and F(0) containing the membrane proton channel, linked together by a central stalk and a peripheral stalk. During catalysis, ATP synthesis in the catalytic domain of F(1) is coupled via a rotary mechanism of the central stalk subunits to proton translocation. This protein is part of the stalk that links CF(0) to CF(1). It either transmits conformational changes from CF(0) to CF(1) or is implicated in proton conduction. The sequence is that of ATP synthase subunit delta from Prochlorococcus marinus (strain MIT 9301).